Reading from the N-terminus, the 478-residue chain is MAEKTSDDIFKLIKDENVEYVDIRFCDLPGVVQHFSIPASAFDESVFEDGLAFDGSSVRGFQSIHESDMMLLPDPNTARIDPFRAAKTLNMNFFVHDPFTREAYSRDPRNVARKAENYLASTGIADTAFFGAEAEFYIFDSVSFDSKINGTFYEVDSESGWWNTGEPFESDGSANRGYKVRPKGGYFPVAPYDHYVDLRDQMATNLQNAGFTLERGHHEVGTAGQAEINYKFNTLLAAADDVLLFKYIIKNTAWQAGKTVTFMPKPLFGDNGSGMHAHQSLWKDGQPLFHDESGYAGLSDIARHYIGGILHHAPSLLAFTNPTVNSYKRLVPGYEAPINLVYSQRNRSACVRIPITGNNPKAKRLEFRCPDSSGNPYLAFAAMLMAGIDGIKKKIEPLQPVDKDLYELPPDEAAAIPQAPTSLSAVIDKLEEDHEYLTEGGVFTEDLIETWISYKRENEIMPIQIRPHPYEFSLYYDV.

Lysine 14 participates in a covalent cross-link: Isoglutamyl lysine isopeptide (Lys-Gln) (interchain with Q-Cter in protein Pup). The 85-residue stretch at 16–100 (ENVEYVDIRF…MNFFVHDPFT (85 aa)) folds into the GS beta-grasp domain. Residues 108–478 (PRNVARKAEN…PYEFSLYYDV (371 aa)) form the GS catalytic domain. Residues glutamate 133 and glutamate 135 each contribute to the Mg(2+) site. Glutamate 214 lines the ATP pocket. Mg(2+) is bound by residues glutamate 219 and glutamate 227. 230 to 232 (YKF) lines the ATP pocket. L-glutamate contacts are provided by residues 271–272 (NG) and glycine 272. Histidine 276 is a Mg(2+) binding site. ATP contacts are provided by residues 278 to 280 (HQS) and serine 280. Residues arginine 329, glutamate 335, and arginine 347 each contribute to the L-glutamate site. Positions 347, 352, and 361 each coordinate ATP. Position 366 (glutamate 366) interacts with Mg(2+). Arginine 368 contributes to the L-glutamate binding site. Tyrosine 406 carries the O-AMP-tyrosine modification.

This sequence belongs to the glutamine synthetase family. As to quaternary structure, oligomer of 12 subunits arranged in the form of two hexagons. Mg(2+) serves as cofactor.

The protein localises to the cytoplasm. The enzyme catalyses L-glutamate + NH4(+) + ATP = L-glutamine + ADP + phosphate + H(+). With respect to regulation, when cellular nitrogen levels are high, the C-terminal adenylyl transferase (AT) of GlnE inhibits GlnA by covalent transfer of an adenylyl group from ATP to Tyr-406. Conversely, when nitrogen levels are low, the N-terminal adenylyl removase (AR) of GlnE activates GlnA by removing the adenylyl group by phosphorolysis. The fully adenylated enzyme complex is inactive. In terms of biological role, involved in nitrogen metabolism via ammonium assimilation. Catalyzes the ATP-dependent biosynthesis of glutamine from glutamate and ammonia. This chain is Glutamine synthetase, found in Mycolicibacterium smegmatis (strain ATCC 700084 / mc(2)155) (Mycobacterium smegmatis).